The chain runs to 156 residues: MYESENASEHHPELEDVFSENTGDSNPSMGSSDSTRSISGMRARDLITDTDVNLLNIDALESKYFPADSTFTLSVWFENLIPPEIEAILPTTDAQLNYISFTSRLASVLKHKESNDSEKSAYVVPCEHSASVTRRRERFAGVMAKFLDLHEILKDA.

Residues 1–37 (MYESENASEHHPELEDVFSENTGDSNPSMGSSDSTRS) form a disordered region. Positions 19-37 (SENTGDSNPSMGSSDSTRS) are enriched in polar residues.

It belongs to the herpesviridae TRM2 protein family. As to quaternary structure, associates with TRM1 and TRM3 to form the tripartite terminase complex.

The protein resides in the host nucleus. In terms of biological role, component of the molecular motor that translocates viral genomic DNA in empty capsid during DNA packaging. Forms a tripartite terminase complex together with TRM1 and TRM3 in the host cytoplasm. Once the complex reaches the host nucleus, it interacts with the capsid portal vertex. This portal forms a ring in which genomic DNA is translocated into the capsid. The protein is Tripartite terminase subunit 2 of Varicella-zoster virus (strain Dumas) (HHV-3).